The primary structure comprises 108 residues: MNKIIELTDQNFEEQVLNSKSFFLVDFWAQWCNPCKILAPILEEISKEYSNKVIVGKLNIEENPNTAPVYSIRSIPTLLLFNNSEVLATKVGAVSKLELKEFLDENIN.

The Thioredoxin domain maps to 2-108 (NKIIELTDQN…LKEFLDENIN (107 aa)). A disulfide bridge links Cys-32 with Cys-35.

It belongs to the thioredoxin family.

Functionally, participates in various redox reactions through the reversible oxidation of its active center dithiol to a disulfide and catalyzes dithiol-disulfide exchange reactions. This chain is Thioredoxin (trxA), found in Buchnera aphidicola subsp. Acyrthosiphon pisum (strain APS) (Acyrthosiphon pisum symbiotic bacterium).